Here is a 274-residue protein sequence, read N- to C-terminus: Membrane protein insertase YidC 2 (274 aa).

The N-terminal stretch at 1 to 20 (MKKKLKLTSLLGLSLLIMTA) is a signal peptide. Residue Cys-21 is the site of N-palmitoyl cysteine attachment. Cys-21 carries the S-diacylglycerol cysteine lipid modification. 4 helical membrane-spanning segments follow: residues 56-76 (ISIGVGIILFTVLIRTVLLPV), 128-148 (SDSLWPILIQMPVILALFQAL), 167-187 (VDTTLVLPILAAVFTFLSTWL), and 205-225 (GIPVLIFIFAVYAPGGVALYW).

This sequence belongs to the OXA1/ALB3/YidC family. Type 2 subfamily.

It localises to the cell membrane. Its function is as follows. Required for the insertion and/or proper folding and/or complex formation of integral membrane proteins into the membrane. Involved in integration of membrane proteins that insert both dependently and independently of the Sec translocase complex, as well as at least some lipoproteins. In Streptococcus pneumoniae serotype 4 (strain ATCC BAA-334 / TIGR4), this protein is Membrane protein insertase YidC 2.